Consider the following 545-residue polypeptide: Cryptochrome-1 (545 aa).

Residues 3-138 (VNNILWFRHG…KCVEKVSHTL (136 aa)) enclose the Photolyase/cryptochrome alpha/beta domain. FAD-binding positions include arginine 236, serine 264, serine 266, glutamine 307, histidine 374, 406–408 (DAD), cysteine 412, and asparagine 415.

The protein belongs to the DNA photolyase class-1 family. In terms of assembly, interacts with tim and per; promoted by light conditions. It depends on FAD as a cofactor.

It is found in the cytoplasm. It localises to the perinuclear region. Its subcellular location is the nucleus. In terms of biological role, blue light-dependent regulator that is the input of the circadian feedback loop. Has no photolyase activity for cyclobutane pyrimidine dimers or 6-4 photoproducts. Regulation of expression by light suggests a role in photoreception for locomotor activity rhythms. Functions, together with per, as a transcriptional repressor required for the oscillation of peripheral circadian clocks and for the correct specification of clock cells. Genes directly activated by the transcription factors Clock (Clk) and cycle (cyc) are repressed by cry. The sequence is that of Cryptochrome-1 from Aedes aegypti (Yellowfever mosquito).